The primary structure comprises 216 residues: RNA pyrophosphohydrolase (216 aa).

A Nudix hydrolase domain is found at 6 to 149 (GFRPNVGIIL…KRDVYQLALT (144 aa)). The Nudix box motif lies at 38–59 (GGIKYGETPMQAMYRELHEETG). The segment at 159-188 (AQRTDKSRGPRAPRYPRVANGHAASEAPAA) is disordered.

This sequence belongs to the Nudix hydrolase family. RppH subfamily. A divalent metal cation serves as cofactor.

Functionally, accelerates the degradation of transcripts by removing pyrophosphate from the 5'-end of triphosphorylated RNA, leading to a more labile monophosphorylated state that can stimulate subsequent ribonuclease cleavage. This is RNA pyrophosphohydrolase from Burkholderia mallei (strain NCTC 10247).